The following is a 613-amino-acid chain: Oxidoreductase GME11365 (613 aa).

3 Plastocyanin-like domains span residues 72-188, 198-331, and 431-571; these read ISEA…HGPS, PLLI…WIHG, and VDWR…EQPS.

It belongs to the multicopper oxidase family.

It functions in the pathway secondary metabolite biosynthesis. Its function is as follows. Oxidoreductase; part of the gene cluster that mediates the biosynthesis of dibenzodioxocinones such as pestalotiollide B, a novel class of inhibitors against cholesterol ester transfer protein (CEPT). The biosynthesis initiates from condensation of acetate and malonate units catalyzed by the non-reducing PKS pks8/GME11356. Pks8/GME11356 lacks a thioesterase (TE) domain, which is important to the cyclizing of the third ring of atrochrysone carboxylic acid, and the esterase GME11355 might play the role of TE and catalyzes the cyclization reaction of the C ring. The lactamase-like protein GME11357 (or other beta-lactamases in Pestalotiopsis microspora) probably hydrolyzes the thioester bond between the ACP of pks8/GME11356 and the intermediate to release atrochrysone carboxylic acid, which is spontaneously dehydrates to form endocrocin anthrone. Endocrocin anthrone is further converted to emodin via the endocrocin intermediate. Emodin is then oxidized by several enzymes such as the Baeyer-Villiger oxidase GME11358, the oxidoreductase GME11367, the short chain dehydrogenase/reductase GME11373, as well as by other oxidoreductases from the cluster, to modify the A and C rings and open the B ring, and finally yield monodictyphenone. The prenyltransferase GME11375 may catalyze the addition reaction between the C5 side chains and the carbon bone of dibenzodioxocinones. The remaining biochemical reactions to the final product dibenzodioxocinones should be methylation catalyzed by methyltransferase GME11366 and reduction and lactonization reaction catalyzed by a series of oxidordeuctases. The protein is Oxidoreductase GME11365 of Pestalotiopsis microspora.